A 273-amino-acid chain; its full sequence is Pyrroline-5-carboxylate reductase (273 aa).

It belongs to the pyrroline-5-carboxylate reductase family.

The protein resides in the cytoplasm. It carries out the reaction L-proline + NADP(+) = (S)-1-pyrroline-5-carboxylate + NADPH + 2 H(+). It catalyses the reaction L-proline + NAD(+) = (S)-1-pyrroline-5-carboxylate + NADH + 2 H(+). It functions in the pathway amino-acid biosynthesis; L-proline biosynthesis; L-proline from L-glutamate 5-semialdehyde: step 1/1. Its function is as follows. Catalyzes the reduction of 1-pyrroline-5-carboxylate (PCA) to L-proline. This chain is Pyrroline-5-carboxylate reductase, found in Pseudomonas aeruginosa (strain ATCC 15692 / DSM 22644 / CIP 104116 / JCM 14847 / LMG 12228 / 1C / PRS 101 / PAO1).